Here is a 261-residue protein sequence, read N- to C-terminus: Cytochrome c oxidase subunit 3 (261 aa).

Residues 1 to 15 (MAHQAHAYHMVDPSP) lie on the Mitochondrial matrix side of the membrane. The chain crosses the membrane as a helical span at residues 16 to 34 (WPLTGAIAALLMTSGLAIW). Topologically, residues 35-40 (FHFHST) are mitochondrial intermembrane. The helical transmembrane segment at 41-66 (TLMTLGLILLLLTMYQWWRDIIREGT) threads the bilayer. Over 67–72 (FQGHHT) the chain is Mitochondrial matrix. The chain crosses the membrane as a helical span at residues 73–105 (PPVQKGLRYGMILFITSEVFFFLGFFWAFYHSS). Over 106–128 (LAPTPELGGCWPPTGITPLDPFE) the chain is Mitochondrial intermembrane. The chain crosses the membrane as a helical span at residues 129–152 (VPLLNTAVLLASGVTVTWAHHSIM). The Mitochondrial matrix segment spans residues 153 to 155 (EGE). The helical transmembrane segment at 156–183 (RKQAIQSLALTILLGLYFTALQAMEYYE) threads the bilayer. The Mitochondrial intermembrane portion of the chain corresponds to 184–190 (APFTIAD). Residues 191–223 (GVYGSTFFVATGFHGLHVIIGSTFLAVCLLRQI) traverse the membrane as a helical segment. Residues 224–232 (QYHFTSEHH) are Mitochondrial matrix-facing. A helical membrane pass occupies residues 233–256 (FGFEAAAWYWHFVDVVWLFLYVSI). Residues 257–261 (YWWGS) lie on the Mitochondrial intermembrane side of the membrane.

The protein belongs to the cytochrome c oxidase subunit 3 family. Component of the cytochrome c oxidase (complex IV, CIV), a multisubunit enzyme composed of 14 subunits. The complex is composed of a catalytic core of 3 subunits MT-CO1, MT-CO2 and MT-CO3, encoded in the mitochondrial DNA, and 11 supernumerary subunits COX4I, COX5A, COX5B, COX6A, COX6B, COX6C, COX7A, COX7B, COX7C, COX8 and NDUFA4, which are encoded in the nuclear genome. The complex exists as a monomer or a dimer and forms supercomplexes (SCs) in the inner mitochondrial membrane with NADH-ubiquinone oxidoreductase (complex I, CI) and ubiquinol-cytochrome c oxidoreductase (cytochrome b-c1 complex, complex III, CIII), resulting in different assemblies (supercomplex SCI(1)III(2)IV(1) and megacomplex MCI(2)III(2)IV(2)).

It localises to the mitochondrion inner membrane. The enzyme catalyses 4 Fe(II)-[cytochrome c] + O2 + 8 H(+)(in) = 4 Fe(III)-[cytochrome c] + 2 H2O + 4 H(+)(out). In terms of biological role, component of the cytochrome c oxidase, the last enzyme in the mitochondrial electron transport chain which drives oxidative phosphorylation. The respiratory chain contains 3 multisubunit complexes succinate dehydrogenase (complex II, CII), ubiquinol-cytochrome c oxidoreductase (cytochrome b-c1 complex, complex III, CIII) and cytochrome c oxidase (complex IV, CIV), that cooperate to transfer electrons derived from NADH and succinate to molecular oxygen, creating an electrochemical gradient over the inner membrane that drives transmembrane transport and the ATP synthase. Cytochrome c oxidase is the component of the respiratory chain that catalyzes the reduction of oxygen to water. Electrons originating from reduced cytochrome c in the intermembrane space (IMS) are transferred via the dinuclear copper A center (CU(A)) of subunit 2 and heme A of subunit 1 to the active site in subunit 1, a binuclear center (BNC) formed by heme A3 and copper B (CU(B)). The BNC reduces molecular oxygen to 2 water molecules using 4 electrons from cytochrome c in the IMS and 4 protons from the mitochondrial matrix. The polypeptide is Cytochrome c oxidase subunit 3 (mt-co3) (Cyprinus carpio (Common carp)).